Here is a 159-residue protein sequence, read N- to C-terminus: SsrA-binding protein (159 aa).

A compositionally biased stretch (basic and acidic residues) spans 133–147 (KRQDLAKRDAQREMA). The interval 133–159 (KRQDLAKRDAQREMARAAGRRSKGMDD) is disordered. Basic residues predominate over residues 150 to 159 (AGRRSKGMDD).

It belongs to the SmpB family.

It localises to the cytoplasm. In terms of biological role, required for rescue of stalled ribosomes mediated by trans-translation. Binds to transfer-messenger RNA (tmRNA), required for stable association of tmRNA with ribosomes. tmRNA and SmpB together mimic tRNA shape, replacing the anticodon stem-loop with SmpB. tmRNA is encoded by the ssrA gene; the 2 termini fold to resemble tRNA(Ala) and it encodes a 'tag peptide', a short internal open reading frame. During trans-translation Ala-aminoacylated tmRNA acts like a tRNA, entering the A-site of stalled ribosomes, displacing the stalled mRNA. The ribosome then switches to translate the ORF on the tmRNA; the nascent peptide is terminated with the 'tag peptide' encoded by the tmRNA and targeted for degradation. The ribosome is freed to recommence translation, which seems to be the essential function of trans-translation. The protein is SsrA-binding protein of Salinispora arenicola (strain CNS-205).